The sequence spans 29 residues: Photosystem I reaction center subunit XII (29 aa).

The chain crosses the membrane as a helical span at residues 7-24 (FVALLLALVPAVLAYRLG).

Belongs to the PsaM family.

The protein resides in the cellular thylakoid membrane. The polypeptide is Photosystem I reaction center subunit XII (Synechococcus sp. (strain ATCC 27144 / PCC 6301 / SAUG 1402/1) (Anacystis nidulans)).